The following is a 1059-amino-acid chain: Carbamoyl phosphate synthase large chain (1059 aa).

The carboxyphosphate synthetic domain stretch occupies residues 1–401 (MPKRTDIHKI…ALLKAVASLE (401 aa)). The ATP site is built by R129, R169, G175, G176, K208, I210, E215, G241, I242, H243, Q284, and E298. Residues 133-327 (KELMQELGEP…IAKLAAKIAV (195 aa)) enclose the ATP-grasp 1 domain. Residues Q284, E298, and N300 each coordinate Mg(2+). The Mn(2+) site is built by Q284, E298, and N300. The interval 402–546 (IDQKDLLSKE…YSTYETENES (145 aa)) is oligomerization domain. Positions 547–929 (RRSAKPSVLV…ALYKAFAGAG (383 aa)) are carbamoyl phosphate synthetic domain. The 191-residue stretch at 671–861 (DQVIKDLNLR…MAQLATKVIL (191 aa)) folds into the ATP-grasp 2 domain. 10 residues coordinate ATP: R707, A746, L748, E752, G777, V778, H779, S780, Q820, and E832. The Mg(2+) site is built by Q820, E832, and N834. Mn(2+) contacts are provided by Q820, E832, and N834. Residues 930–1059 (MEVPDNGAVL…EMTSFKTTEL (130 aa)) form the MGS-like domain. The segment at 930-1059 (MEVPDNGAVL…EMTSFKTTEL (130 aa)) is allosteric domain.

The protein belongs to the CarB family. As to quaternary structure, composed of two chains; the small (or glutamine) chain promotes the hydrolysis of glutamine to ammonia, which is used by the large (or ammonia) chain to synthesize carbamoyl phosphate. Tetramer of heterodimers (alpha,beta)4. Mg(2+) is required as a cofactor. It depends on Mn(2+) as a cofactor.

The catalysed reaction is hydrogencarbonate + L-glutamine + 2 ATP + H2O = carbamoyl phosphate + L-glutamate + 2 ADP + phosphate + 2 H(+). It catalyses the reaction hydrogencarbonate + NH4(+) + 2 ATP = carbamoyl phosphate + 2 ADP + phosphate + 2 H(+). It functions in the pathway amino-acid biosynthesis; L-arginine biosynthesis; carbamoyl phosphate from bicarbonate: step 1/1. The protein operates within pyrimidine metabolism; UMP biosynthesis via de novo pathway; (S)-dihydroorotate from bicarbonate: step 1/3. Functionally, large subunit of the glutamine-dependent carbamoyl phosphate synthetase (CPSase). CPSase catalyzes the formation of carbamoyl phosphate from the ammonia moiety of glutamine, carbonate, and phosphate donated by ATP, constituting the first step of 2 biosynthetic pathways, one leading to arginine and/or urea and the other to pyrimidine nucleotides. The large subunit (synthetase) binds the substrates ammonia (free or transferred from glutamine from the small subunit), hydrogencarbonate and ATP and carries out an ATP-coupled ligase reaction, activating hydrogencarbonate by forming carboxy phosphate which reacts with ammonia to form carbamoyl phosphate. The polypeptide is Carbamoyl phosphate synthase large chain (Limosilactobacillus fermentum (strain NBRC 3956 / LMG 18251) (Lactobacillus fermentum)).